Reading from the N-terminus, the 143-residue chain is Transcriptional regulator MraZ (143 aa).

2 SpoVT-AbrB domains span residues 5 to 47 and 76 to 119; these read THTP…PMQE and ASSE…DLRT.

Belongs to the MraZ family. In terms of assembly, forms oligomers.

The protein resides in the cytoplasm. Its subcellular location is the nucleoid. The protein is Transcriptional regulator MraZ of Kineococcus radiotolerans (strain ATCC BAA-149 / DSM 14245 / SRS30216).